Consider the following 364-residue polypeptide: Phosphoserine aminotransferase (364 aa).

Arg46 contacts L-glutamate. Pyridoxal 5'-phosphate-binding positions include 80 to 81 (AR), Trp106, Thr157, Asp176, and Gln199. Lys200 is modified (N6-(pyridoxal phosphate)lysine). Residue 241 to 242 (NT) participates in pyridoxal 5'-phosphate binding.

Belongs to the class-V pyridoxal-phosphate-dependent aminotransferase family. SerC subfamily. As to quaternary structure, homodimer. Pyridoxal 5'-phosphate is required as a cofactor.

The protein localises to the cytoplasm. It carries out the reaction O-phospho-L-serine + 2-oxoglutarate = 3-phosphooxypyruvate + L-glutamate. The enzyme catalyses 4-(phosphooxy)-L-threonine + 2-oxoglutarate = (R)-3-hydroxy-2-oxo-4-phosphooxybutanoate + L-glutamate. The protein operates within amino-acid biosynthesis; L-serine biosynthesis; L-serine from 3-phospho-D-glycerate: step 2/3. Its pathway is cofactor biosynthesis; pyridoxine 5'-phosphate biosynthesis; pyridoxine 5'-phosphate from D-erythrose 4-phosphate: step 3/5. Functionally, catalyzes the reversible conversion of 3-phosphohydroxypyruvate to phosphoserine and of 3-hydroxy-2-oxo-4-phosphonooxybutanoate to phosphohydroxythreonine. The polypeptide is Phosphoserine aminotransferase (Vibrio cholerae serotype O1 (strain ATCC 39315 / El Tor Inaba N16961)).